The chain runs to 162 residues: ATP synthase subunit b 1 (162 aa).

Residues 1–21 traverse the membrane as a helical segment; that stretch reads MLLTAEFWVAVAFVAFLVIVW.

This sequence belongs to the ATPase B chain family. F-type ATPases have 2 components, F(1) - the catalytic core - and F(0) - the membrane proton channel. F(1) has five subunits: alpha(3), beta(3), gamma(1), delta(1), epsilon(1). F(0) has three main subunits: a(1), b(2) and c(10-14). The alpha and beta chains form an alternating ring which encloses part of the gamma chain. F(1) is attached to F(0) by a central stalk formed by the gamma and epsilon chains, while a peripheral stalk is formed by the delta and b chains.

The protein localises to the cell inner membrane. Functionally, f(1)F(0) ATP synthase produces ATP from ADP in the presence of a proton or sodium gradient. F-type ATPases consist of two structural domains, F(1) containing the extramembraneous catalytic core and F(0) containing the membrane proton channel, linked together by a central stalk and a peripheral stalk. During catalysis, ATP synthesis in the catalytic domain of F(1) is coupled via a rotary mechanism of the central stalk subunits to proton translocation. Component of the F(0) channel, it forms part of the peripheral stalk, linking F(1) to F(0). In Methylorubrum extorquens (strain PA1) (Methylobacterium extorquens), this protein is ATP synthase subunit b 1.